We begin with the raw amino-acid sequence, 396 residues long: Elongation factor Tu (396 aa).

A tr-type G domain is found at 10 to 206 (KPHVNVGTIG…ALDSFIPEPT (197 aa)). The segment at 19-26 (GHVDHGKT) is G1. 19 to 26 (GHVDHGKT) contributes to the GTP binding site. Threonine 26 contributes to the Mg(2+) binding site. The G2 stretch occupies residues 60–64 (GITIS). The tract at residues 81–84 (DCPG) is G3. GTP-binding positions include 81-85 (DCPGH) and 136-139 (NKAD). Positions 136 to 139 (NKAD) are G4. The interval 174–176 (SAR) is G5.

This sequence belongs to the TRAFAC class translation factor GTPase superfamily. Classic translation factor GTPase family. EF-Tu/EF-1A subfamily. As to quaternary structure, monomer.

It localises to the cytoplasm. It catalyses the reaction GTP + H2O = GDP + phosphate + H(+). In terms of biological role, GTP hydrolase that promotes the GTP-dependent binding of aminoacyl-tRNA to the A-site of ribosomes during protein biosynthesis. The chain is Elongation factor Tu from Xanthomonas euvesicatoria pv. vesicatoria (strain 85-10) (Xanthomonas campestris pv. vesicatoria).